The primary structure comprises 668 residues: DNA ligase (668 aa).

NAD(+)-binding positions include 34–38 (DTEYD), 83–84 (SL), and Glu-114. Lys-116 acts as the N6-AMP-lysine intermediate in catalysis. NAD(+) is bound by residues Arg-137, Glu-171, Lys-286, and Lys-310. Residues Cys-404, Cys-407, Cys-422, and Cys-427 each contribute to the Zn(2+) site. A BRCT domain is found at 588–668 (NSDSIIANKS…FFDLLKSEKG (81 aa)).

Belongs to the NAD-dependent DNA ligase family. LigA subfamily. Mg(2+) serves as cofactor. It depends on Mn(2+) as a cofactor.

It catalyses the reaction NAD(+) + (deoxyribonucleotide)n-3'-hydroxyl + 5'-phospho-(deoxyribonucleotide)m = (deoxyribonucleotide)n+m + AMP + beta-nicotinamide D-nucleotide.. DNA ligase that catalyzes the formation of phosphodiester linkages between 5'-phosphoryl and 3'-hydroxyl groups in double-stranded DNA using NAD as a coenzyme and as the energy source for the reaction. It is essential for DNA replication and repair of damaged DNA. This is DNA ligase from Mycoplasma mycoides subsp. mycoides SC (strain CCUG 32753 / NCTC 10114 / PG1).